The following is a 147-amino-acid chain: Ubiquitin-conjugating enzyme E2 D4 (147 aa).

The region spanning 1–147 (MALKRIQKEL…AREWTQKYAM (147 aa)) is the UBC core domain. Cys-85 functions as the Glycyl thioester intermediate in the catalytic mechanism.

Belongs to the ubiquitin-conjugating enzyme family.

It carries out the reaction S-ubiquitinyl-[E1 ubiquitin-activating enzyme]-L-cysteine + [E2 ubiquitin-conjugating enzyme]-L-cysteine = [E1 ubiquitin-activating enzyme]-L-cysteine + S-ubiquitinyl-[E2 ubiquitin-conjugating enzyme]-L-cysteine.. Its pathway is protein modification; protein ubiquitination. In terms of biological role, accepts ubiquitin from the E1 complex and catalyzes its covalent attachment to other proteins. In vitro able to promote polyubiquitination using all 7 ubiquitin Lys residues, but may prefer 'Lys-11' and 'Lys-48'-linked polyubiquitination. This Homo sapiens (Human) protein is Ubiquitin-conjugating enzyme E2 D4 (UBE2D4).